A 128-amino-acid polypeptide reads, in one-letter code: Large ribosomal subunit protein bL12 (128 aa).

This sequence belongs to the bacterial ribosomal protein bL12 family. Homodimer. Part of the ribosomal stalk of the 50S ribosomal subunit. Forms a multimeric L10(L12)X complex, where L10 forms an elongated spine to which 2 to 4 L12 dimers bind in a sequential fashion. Binds GTP-bound translation factors.

Functionally, forms part of the ribosomal stalk which helps the ribosome interact with GTP-bound translation factors. Is thus essential for accurate translation. In Petrotoga mobilis (strain DSM 10674 / SJ95), this protein is Large ribosomal subunit protein bL12.